The sequence spans 159 residues: Peptide methionine sulfoxide reductase MsrB (159 aa).

One can recognise a MsrB domain in the interval 14–137 (TEKLKENLTE…NSASLKFIAK (124 aa)). Catalysis depends on C126, which acts as the Nucleophile.

It belongs to the MsrB Met sulfoxide reductase family.

The enzyme catalyses L-methionyl-[protein] + [thioredoxin]-disulfide + H2O = L-methionyl-(R)-S-oxide-[protein] + [thioredoxin]-dithiol. The polypeptide is Peptide methionine sulfoxide reductase MsrB (Hathewaya histolytica (Clostridium histolyticum)).